A 97-amino-acid polypeptide reads, in one-letter code: MTSSPVSRVVYNGKRNSSPRSPTNSSEIFTPAHEENVRFIYEAWQGVERDLRSQLSSGERCLVEEYVEKVPNPSLKTFKPIDLSDLKRRNTQDAKKS.

The tract at residues 1–29 (MTSSPVSRVVYNGKRNSSPRSPTNSSEIF) is disordered. Low complexity predominate over residues 15–26 (RNSSPRSPTNSS). Residue S21 is modified to Phosphoserine. A Phosphothreonine modification is found at T30. Y41 is modified (phosphotyrosine). Position 79 is an N6-acetyllysine (K79). Residues 80-84 (PIDLS) carry the PXDLS motif motif.

It belongs to the MCRIP family. In terms of assembly, interacts (unphosphorylated form, via the PXDLS motif) with CTBP1, competitively inhibiting CTBP-ZEB1 interaction. Interacts with CTBP2. Interacts with MCRIP2. Interacts with DDX6. Phosphorylation by MAPK3/1 (ERK1/2) regulates MCRIP1 binding to CTBP(s). As to expression, widely expressed (at protein level).

The protein resides in the nucleus. Its subcellular location is the cytoplasm. The protein localises to the stress granule. Functionally, the phosphorylation status of MCRIP1 functions as a molecular switch to regulate epithelial-mesenchymal transition. Unphosphorylated MCRIP1 binds to and inhibits the transcriptional corepressor CTBP(s). When phosphorylated by MAPK/ERK, MCRIP1 releases CTBP(s) resulting in transcriptional silencing of the E-cadherin gene and induction of epithelial-mesenchymal transition. This chain is Mapk-regulated corepressor-interacting protein 1 (Mcrip1), found in Mus musculus (Mouse).